The primary structure comprises 140 residues: ATP synthase epsilon chain (140 aa).

It belongs to the ATPase epsilon chain family. In terms of assembly, F-type ATPases have 2 components, CF(1) - the catalytic core - and CF(0) - the membrane proton channel. CF(1) has five subunits: alpha(3), beta(3), gamma(1), delta(1), epsilon(1). CF(0) has three main subunits: a, b and c.

The protein localises to the cell membrane. Its function is as follows. Produces ATP from ADP in the presence of a proton gradient across the membrane. This Baumannia cicadellinicola subsp. Homalodisca coagulata protein is ATP synthase epsilon chain.